We begin with the raw amino-acid sequence, 247 residues long: MTVDISRATADELRSIAERGAVELDGASAQELLQWTEDTFGDGASAATGDRNGYIVASNMQDGVLVHLAAQVHPGVDVLFLDTGYHFPETIGTRDAVEQVYGVNVINARALASVAEQDVAEGKDLFARDPNRCCALRKVAPLKQTLSGYSAWVTGIRRVEAPTRANAPLISFDEAFGLVKINPIAPWSDEEMQNYIDTNSILVNPLVDEGYPSIGCAPCTSKPAPGSDPRSGRWAGASKTECGLHAS.

The [4Fe-4S] cluster site is built by C133, C134, C216, and C219. The tract at residues 222-247 (KPAPGSDPRSGRWAGASKTECGLHAS) is disordered. The active-site Nucleophile; cysteine thiosulfonate intermediate is the C242.

It belongs to the PAPS reductase family. CysH subfamily. It depends on [4Fe-4S] cluster as a cofactor.

The protein localises to the cytoplasm. It carries out the reaction [thioredoxin]-disulfide + sulfite + AMP + 2 H(+) = adenosine 5'-phosphosulfate + [thioredoxin]-dithiol. Its pathway is sulfur metabolism; hydrogen sulfide biosynthesis; sulfite from sulfate. In terms of biological role, catalyzes the formation of sulfite from adenosine 5'-phosphosulfate (APS) using thioredoxin as an electron donor. The chain is Adenosine 5'-phosphosulfate reductase from Rhodococcus erythropolis (strain PR4 / NBRC 100887).